A 229-amino-acid chain; its full sequence is Large ribosomal subunit protein uL1 (229 aa).

Belongs to the universal ribosomal protein uL1 family. Part of the 50S ribosomal subunit.

Functionally, binds directly to 23S rRNA. The L1 stalk is quite mobile in the ribosome, and is involved in E site tRNA release. Protein L1 is also a translational repressor protein, it controls the translation of the L11 operon by binding to its mRNA. In Gemmatimonas aurantiaca (strain DSM 14586 / JCM 11422 / NBRC 100505 / T-27), this protein is Large ribosomal subunit protein uL1.